We begin with the raw amino-acid sequence, 179 residues long: Protein Syd (179 aa).

This sequence belongs to the Syd family.

The protein localises to the cell inner membrane. In terms of biological role, interacts with the SecY protein in vivo. May bind preferentially to an uncomplexed state of SecY, thus functioning either as a chelating agent for excess SecY in the cell or as a regulatory factor that negatively controls the translocase function. In Pseudoalteromonas translucida (strain TAC 125), this protein is Protein Syd.